We begin with the raw amino-acid sequence, 395 residues long: Cytoplasmic 60S subunit biogenesis factor REI1 homolog 2 (395 aa).

4 C2H2-type zinc fingers span residues 4–28 (LACN…SEWH), 68–92 (YSCG…SKSH), 171–194 (ACCL…HKFH), and 222–249 (FVCL…AKGH).

Belongs to the REI1 family. In terms of assembly, can form homodimer. Interacts with RLP24, RLP24A, RPL24B, EBP1 and JJJ1.

The protein resides in the cytoplasm. Pre-60S-associated factor involved in the cytoplasmic maturation of the 60S subunit. Involved in the dissociation and recycling of other late pre-60S factors before newly synthesized large ribosomal subunits enter translation. Can complement the growth defect of a yeast mutant lacking REI1. Required for leaf growth under cold temperature conditions. This Arabidopsis thaliana (Mouse-ear cress) protein is Cytoplasmic 60S subunit biogenesis factor REI1 homolog 2.